A 208-amino-acid polypeptide reads, in one-letter code: Granulocyte colony-stimulating factor (208 aa).

An N-terminal signal peptide occupies residues 1–30 (MAQLSAQRRMKLMALQLLLWQSALWSGREA). 2 disulfide bridges follow: cysteine 72–cysteine 78 and cysteine 100–cysteine 110. O-linked (GalNAc...) threonine glycosylation is present at threonine 169.

Belongs to the IL-6 superfamily. Monomer. Post-translationally, O-glycosylated.

It is found in the secreted. In terms of biological role, granulocyte/macrophage colony-stimulating factors are cytokines that act in hematopoiesis by controlling the production, differentiation, and function of 2 related white cell populations of the blood, the granulocytes and the monocytes-macrophages. This CSF induces granulocytes. The sequence is that of Granulocyte colony-stimulating factor (Csf3) from Mus musculus (Mouse).